Consider the following 288-residue polypeptide: Bis(5'-nucleosyl)-tetraphosphatase, symmetrical (288 aa).

This sequence belongs to the Ap4A hydrolase family.

It catalyses the reaction P(1),P(4)-bis(5'-adenosyl) tetraphosphate + H2O = 2 ADP + 2 H(+). Functionally, hydrolyzes diadenosine 5',5'''-P1,P4-tetraphosphate to yield ADP. This chain is Bis(5'-nucleosyl)-tetraphosphatase, symmetrical, found in Pseudomonas putida (strain W619).